Consider the following 81-residue polypeptide: Acyl carrier protein (81 aa).

A Carrier domain is found at 1 to 79 (MDREEILQKI…EAVDYVVEHQ (79 aa)). Serine 39 bears the O-(pantetheine 4'-phosphoryl)serine mark.

This sequence belongs to the acyl carrier protein (ACP) family. In terms of processing, 4'-phosphopantetheine is transferred from CoA to a specific serine of apo-ACP by AcpS. This modification is essential for activity because fatty acids are bound in thioester linkage to the sulfhydryl of the prosthetic group.

Its subcellular location is the cytoplasm. It functions in the pathway lipid metabolism; fatty acid biosynthesis. Carrier of the growing fatty acid chain in fatty acid biosynthesis. This chain is Acyl carrier protein, found in Rubrobacter xylanophilus (strain DSM 9941 / JCM 11954 / NBRC 16129 / PRD-1).